The following is an 860-amino-acid chain: Receptor-like protein 31 (860 aa).

The first 23 residues, 1 to 23, serve as a signal peptide directing secretion; sequence MMIPSQSCFCFFFMVSFFLHTLA. The Extracellular portion of the chain corresponds to 24-809; sequence SPTLRHCRHD…SEPEEHVINW (786 aa). N-linked (GlcNAc...) asparagine glycosylation is found at Asn-49, Asn-64, Asn-88, Asn-95, Asn-112, Asn-117, Asn-154, Asn-178, Asn-202, and Asn-213. LRR repeat units follow at residues 108–131, 132–155, 156–179, 181–202, 203–226, and 227–251; these read QHLHNLTLSNCSLYGDIPSSLGNL, FRLTLLDLSYNYLVGQVPPSIGNL, SRLTILDLWDNKLVGQLPASIGNL, QLEYLIFSHNKFSGNIPVTFSN, LTKLLVVNLYNNSFESMLPLDMSG, and FQNLDYFNVGENSFSGTLPKSLFTI. An LRR 7; degenerate repeat occupies 252–276; sequence PSLRWANLEGNMFKGPIEFRNMYSP. LRR repeat units lie at residues 277 to 301, 302 to 325, 326 to 349, 350 to 374, 376 to 398, 400 to 419, 420 to 444, 446 to 468, 469 to 494, 496 to 517, 518 to 541, 543 to 564, 565 to 591, and 592 to 615; these read STRLQYLFLSQNKFDGPIPDTLSQY, LNLIELDLSFNNLTGSFPTFLFTI, PTLERVNLEGNHLKGPVEFGNMSS, SSSLKFLNFAQNEFNGSIPESVSQY, NLEELHLSFNNFIGTIPRSISKL, KLEYFCLEDNNMVGEVPSWL, WRLTMVALSNNSFNSFGESSEGLDE, QVQWLDLSSNSFQGPFPHWICKL, RSLEILIMSDNRFNGSIPPCLSSFMV, LTDLILRNNSLSGPLPDIFVNA, TKLLSLDVSRNKLDGVLPKSLIHC, AMQLLNVRSNKIKDKFPSWLGS, LPSLHVLILRSNEFYGTLYQPHASIGF, and QSLRVIDVSHNDLIGTLPSFYFSS. Residues Asn-313, Asn-346, and Asn-364 are each glycosylated (N-linked (GlcNAc...) asparagine). A glycan (N-linked (GlcNAc...) asparagine) is linked at Asn-429. 3 N-linked (GlcNAc...) asparagine glycosylation sites follow: Asn-482, Asn-503, and Asn-516. Residues Asn-642, Asn-673, and Asn-697 are each glycosylated (N-linked (GlcNAc...) asparagine). LRR repeat units lie at residues 665–690, 691–714, 716–738, and 740–763; these read INEENKVINFSGNRFSGNIPESIGLL, KELRHLNLSSNAFTGNIPQSLANL, KLEALDLSLNQLSGQIPQGLGSL, and FMSTMNFSYNFLEGPVPKSTQFQG. N-linked (GlcNAc...) asparagine glycosylation is found at Asn-745 and Asn-765. The chain crosses the membrane as a helical span at residues 810–830; it reads IAAGIAYGPGVVCGLVIGHIF. At 831 to 860 the chain is on the cytoplasmic side; the sequence is LSHKHECWFMEKFRRKKPKVVTRIARPSKH.

The protein belongs to the RLP family.

It localises to the cell membrane. This chain is Receptor-like protein 31, found in Arabidopsis thaliana (Mouse-ear cress).